The sequence spans 379 residues: Serine/threonine-protein kinase spe-6 (379 aa).

A Protein kinase domain is found at 26–302 (WKVLRNIYSG…SQAATEHQVT (277 aa)). ATP contacts are provided by residues 32-40 (IYSGPFSDV) and K55. Catalysis depends on D147, which acts as the Proton acceptor. Positions 331–379 (ASAKLDAKDNANESMDIEFDDMPPKEGISKSLSAEKSCTKNVETARTEK) are disordered. Positions 360–372 (KSLSAEKSCTKNV) are enriched in polar residues.

The protein belongs to the protein kinase superfamily. CK1 Ser/Thr protein kinase family.

It catalyses the reaction L-seryl-[protein] + ATP = O-phospho-L-seryl-[protein] + ADP + H(+). The catalysed reaction is L-threonyl-[protein] + ATP = O-phospho-L-threonyl-[protein] + ADP + H(+). Serine/threonine-protein kinase which is involved in spermatogenesis. In spermatocytes, regulates meiosis and the localization and assembly of major sperm protein (MSP) into fibrous bodies. In addition, may suppress the initiation of spermiogenesis downstream of spe-8, spe-12, spe-27 and spe-29. The chain is Serine/threonine-protein kinase spe-6 from Caenorhabditis elegans.